Here is a 377-residue protein sequence, read N- to C-terminus: SH2/SH3 adapter protein NCK1 (377 aa).

At A2 the chain carries N-acetylalanine. Residues A2–S61 form the SH3 1 domain. Phosphoserine is present on residues S85, S89, S91, and S96. Y105 bears the Phosphotyrosine mark. The SH3 2 domain occupies D106–D165. S166 is modified (phosphoserine). Residues Q190–N252 enclose the SH3 3 domain. Positions W282–L376 constitute an SH2 domain.

Interacts (via SH2 domain and SH3 domain 2) with EGFR. Interacts with PAK1 and SOS1. Interacts (via SH3 domains) with PKN2. Associates with BLNK, PLCG1, VAV1 and NCK1 in a B-cell antigen receptor-dependent fashion. Interacts with SOCS7. This interaction is required for nuclear import. Part of a complex containing PPP1R15B, PP1 and NCK1. Interacts with RALGPS1. Interacts with CAV2 (tyrosine phosphorylated form). Interacts with ADAM15. Interacts with FASLG. Directly interacts with RASA1. Interacts with isoform 4 of MINK1. Interacts with FLT1 (tyrosine phosphorylated). Interacts with KDR (tyrosine phosphorylated). Interacts (via SH2 domain) with EPHB1; activates the JUN cascade to regulate cell adhesion. Interacts with EPHA2. Interacts (via SH2 domain) with PDGFRB (tyrosine phosphorylated). Interacts with the inactive form of EIF2AK2/PKR. Interacts with PTPN1. Interacts with INSR/insulin receptor (in response to insulin stimulation); This interaction may mediate PTPN1 recruitment leading to INSR dephosphorylation. Interacts with IRS1. Phosphorylated on Ser and Tyr residues. Phosphorylated in response to activation of EGFR and FcERI. Phosphorylated by activated PDGFRB.

It localises to the cytoplasm. The protein localises to the endoplasmic reticulum. It is found in the nucleus. In terms of biological role, adapter protein which associates with tyrosine-phosphorylated growth factor receptors, such as KDR and PDGFRB, or their cellular substrates. Maintains low levels of EIF2S1 phosphorylation by promoting its dephosphorylation by PP1. Plays a role in the DNA damage response, not in the detection of the damage by ATM/ATR, but for efficient activation of downstream effectors, such as that of CHEK2. Plays a role in ELK1-dependent transcriptional activation in response to activated Ras signaling. Modulates the activation of EIF2AK2/PKR by dsRNA. May play a role in cell adhesion and migration through interaction with ephrin receptors. This Homo sapiens (Human) protein is SH2/SH3 adapter protein NCK1 (NCK1).